The sequence spans 103 residues: Large ribosomal subunit protein eL21 (103 aa).

The protein belongs to the eukaryotic ribosomal protein eL21 family.

In Sulfolobus acidocaldarius (strain ATCC 33909 / DSM 639 / JCM 8929 / NBRC 15157 / NCIMB 11770), this protein is Large ribosomal subunit protein eL21.